The sequence spans 427 residues: Serine hydroxymethyltransferase (427 aa).

Residue 120–122 coordinates (6S)-5,6,7,8-tetrahydrofolate; the sequence is GHI. Lys-226 carries the post-translational modification N6-(pyridoxal phosphate)lysine. Glu-243 serves as a coordination point for (6S)-5,6,7,8-tetrahydrofolate.

This sequence belongs to the SHMT family. In terms of assembly, homodimer. Pyridoxal 5'-phosphate is required as a cofactor.

The protein resides in the cytoplasm. It functions in the pathway amino-acid biosynthesis; glycine biosynthesis; glycine from L-serine: step 1/1. Functionally, catalyzes the reversible interconversion of serine and glycine with a modified folate serving as the one-carbon carrier. Also exhibits a pteridine-independent aldolase activity toward beta-hydroxyamino acids, producing glycine and aldehydes, via a retro-aldol mechanism. This Thermococcus gammatolerans (strain DSM 15229 / JCM 11827 / EJ3) protein is Serine hydroxymethyltransferase.